A 304-amino-acid chain; its full sequence is Homoserine kinase (304 aa).

90 to 100 (PLARGLGSSAS) contacts ATP.

The protein belongs to the GHMP kinase family. Homoserine kinase subfamily.

Its subcellular location is the cytoplasm. It carries out the reaction L-homoserine + ATP = O-phospho-L-homoserine + ADP + H(+). It functions in the pathway amino-acid biosynthesis; L-threonine biosynthesis; L-threonine from L-aspartate: step 4/5. Functionally, catalyzes the ATP-dependent phosphorylation of L-homoserine to L-homoserine phosphate. The sequence is that of Homoserine kinase from Staphylococcus aureus (strain MSSA476).